The following is a 309-amino-acid chain: ADP-L-glycero-D-manno-heptose-6-epimerase (309 aa).

NADP(+) contacts are provided by residues 10 to 11 (MI), 31 to 32 (DN), K38, K53, 75 to 79 (EGACS), and N92. Y139 (proton acceptor) is an active-site residue. Position 143 (K143) interacts with NADP(+). N168 serves as a coordination point for substrate. NADP(+) contacts are provided by V169 and K177. The active-site Proton acceptor is K177. Substrate is bound by residues S179, H186, 200 to 203 (FDGS), R208, and Y271.

The protein belongs to the NAD(P)-dependent epimerase/dehydratase family. HldD subfamily. In terms of assembly, homopentamer. NADP(+) serves as cofactor.

It carries out the reaction ADP-D-glycero-beta-D-manno-heptose = ADP-L-glycero-beta-D-manno-heptose. It functions in the pathway nucleotide-sugar biosynthesis; ADP-L-glycero-beta-D-manno-heptose biosynthesis; ADP-L-glycero-beta-D-manno-heptose from D-glycero-beta-D-manno-heptose 7-phosphate: step 4/4. Functionally, catalyzes the interconversion between ADP-D-glycero-beta-D-manno-heptose and ADP-L-glycero-beta-D-manno-heptose via an epimerization at carbon 6 of the heptose. This is ADP-L-glycero-D-manno-heptose-6-epimerase from Serratia proteamaculans (strain 568).